The sequence spans 85 residues: N.vectensis toxin 1 6 (85 aa).

The signal sequence occupies residues 1 to 20 (MASFKIVIVCLALLVAVACA). The propeptide occupies 21-36 (RRRDMMSDDELDYHYS). Disulfide bonds link cysteine 42–cysteine 82, cysteine 44–cysteine 72, and cysteine 65–cysteine 83.

It belongs to the sea anemone sodium channel inhibitory toxin family. Type II subfamily. Expressed in ectodermal glands and in clumps outside of the extodermal layer. Is not expressed in nematocytes. In adult female tissues, shows similar expression levels in mesenteries (gametes-producing tissue), tentacles, pharynx and physa.

It is found in the secreted. Its function is as follows. Binds to site 3 of voltage-gated sodium channels and inhibits the inactivation process. Is highly active on DmNav1/TipE (drosophila) and is only extremely weakly active on rat Nav1.4-beta-1/SCN4A-SCN1B, and on human Nav1.5-beta-1/SCN5A-beta-1. This reveals high specificity for arthropod over mammalian channels. In vivo, when released into the medium, this recombinant toxin induces impaired swimming, paralysis and death of the crustacean A.nauplii within several hours. Also causes paralysis of cherry shrimps immediately after injection at very low doses. Its effect on zebrafish (D.rerio) larvae is also rapid, since it induces tail twitching accompanied by impaired swimming after 20 minutes and complete paralysis within 45 minutes. It has also been observed to cause death of zebrafish larvae within 1 hour. The polypeptide is N.vectensis toxin 1 6 (Nematostella vectensis (Starlet sea anemone)).